The following is a 284-amino-acid chain: tRNA-splicing endonuclease (284 aa).

Active-site residues include Y222, H229, and K257.

It belongs to the tRNA-intron endonuclease family. Archaeal long subfamily. In terms of assembly, homodimer.

It carries out the reaction pretRNA = a 3'-half-tRNA molecule with a 5'-OH end + a 5'-half-tRNA molecule with a 2',3'-cyclic phosphate end + an intron with a 2',3'-cyclic phosphate and a 5'-hydroxyl terminus.. Endonuclease that removes tRNA introns. Cleaves pre-tRNA at the 5'- and 3'-splice sites to release the intron. The products are an intron and two tRNA half-molecules bearing 2',3' cyclic phosphate and 5'-OH termini. Recognizes a pseudosymmetric substrate in which 2 bulged loops of 3 bases are separated by a stem of 4 bp. The polypeptide is tRNA-splicing endonuclease (Picrophilus torridus (strain ATCC 700027 / DSM 9790 / JCM 10055 / NBRC 100828 / KAW 2/3)).